The primary structure comprises 140 residues: Transcription antitermination protein NusB (140 aa).

Belongs to the NusB family.

In terms of biological role, involved in transcription antitermination. Required for transcription of ribosomal RNA (rRNA) genes. Binds specifically to the boxA antiterminator sequence of the ribosomal RNA (rrn) operons. This chain is Transcription antitermination protein NusB, found in Streptococcus pneumoniae (strain JJA).